The following is a 476-amino-acid chain: Glycogen synthase (476 aa).

Lysine 15 provides a ligand contact to ADP-alpha-D-glucose.

Belongs to the glycosyltransferase 1 family. Bacterial/plant glycogen synthase subfamily.

The catalysed reaction is [(1-&gt;4)-alpha-D-glucosyl](n) + ADP-alpha-D-glucose = [(1-&gt;4)-alpha-D-glucosyl](n+1) + ADP + H(+). The protein operates within glycan biosynthesis; glycogen biosynthesis. Functionally, synthesizes alpha-1,4-glucan chains using ADP-glucose. This chain is Glycogen synthase, found in Actinobacillus succinogenes (strain ATCC 55618 / DSM 22257 / CCUG 43843 / 130Z).